The primary structure comprises 129 residues: Large ribosomal subunit protein bL20 (129 aa).

This sequence belongs to the bacterial ribosomal protein bL20 family.

Its function is as follows. Binds directly to 23S ribosomal RNA and is necessary for the in vitro assembly process of the 50S ribosomal subunit. It is not involved in the protein synthesizing functions of that subunit. In Mycobacterium marinum (strain ATCC BAA-535 / M), this protein is Large ribosomal subunit protein bL20.